The primary structure comprises 396 residues: Elongation factor Tu (396 aa).

The 195-residue stretch at 11–205 (KPHVNIGTIG…IVDEYIPTPE (195 aa)) folds into the tr-type G domain. The interval 20-27 (GHVDHGKT) is G1. GTP is bound at residue 20–27 (GHVDHGKT). Residue T27 coordinates Mg(2+). The segment at 61 to 65 (GITIN) is G2. A G3 region spans residues 82–85 (DAPG). GTP-binding positions include 82 to 86 (DAPGH) and 137 to 140 (NKCD). The segment at 137–140 (NKCD) is G4. Positions 175 to 177 (SAL) are G5.

This sequence belongs to the TRAFAC class translation factor GTPase superfamily. Classic translation factor GTPase family. EF-Tu/EF-1A subfamily. Monomer.

It localises to the cytoplasm. The enzyme catalyses GTP + H2O = GDP + phosphate + H(+). Functionally, GTP hydrolase that promotes the GTP-dependent binding of aminoacyl-tRNA to the A-site of ribosomes during protein biosynthesis. This chain is Elongation factor Tu, found in Lactobacillus acidophilus (strain ATCC 700396 / NCK56 / N2 / NCFM).